A 283-amino-acid polypeptide reads, in one-letter code: Urease accessory protein UreD (283 aa).

Residues 1–21 (MTQTQPVGTLRLTIDDQGPQG) are disordered.

The protein belongs to the UreD family. UreD, UreF and UreG form a complex that acts as a GTP-hydrolysis-dependent molecular chaperone, activating the urease apoprotein by helping to assemble the nickel containing metallocenter of UreC. The UreE protein probably delivers the nickel.

The protein resides in the cytoplasm. In terms of biological role, probably acts in the maturation of urease via the functional incorporation of the urease nickel metallocenter. Required for urease expression. In Corynebacterium glutamicum (strain ATCC 13032 / DSM 20300 / JCM 1318 / BCRC 11384 / CCUG 27702 / LMG 3730 / NBRC 12168 / NCIMB 10025 / NRRL B-2784 / 534), this protein is Urease accessory protein UreD.